Here is a 250-residue protein sequence, read N- to C-terminus: Ribose-5-phosphate isomerase A (250 aa).

Substrate-binding positions include Thr33–Thr36, Asp89–Asp92, and Lys102–Gly105. The Proton acceptor role is filled by Glu111. Lys129 lines the substrate pocket.

It belongs to the ribose 5-phosphate isomerase family. In terms of assembly, homodimer.

The enzyme catalyses aldehydo-D-ribose 5-phosphate = D-ribulose 5-phosphate. Its pathway is carbohydrate degradation; pentose phosphate pathway; D-ribose 5-phosphate from D-ribulose 5-phosphate (non-oxidative stage): step 1/1. Its function is as follows. Catalyzes the reversible conversion of ribose-5-phosphate to ribulose 5-phosphate. This chain is Ribose-5-phosphate isomerase A, found in Cereibacter sphaeroides (strain ATCC 17025 / ATH 2.4.3) (Rhodobacter sphaeroides).